The sequence spans 289 residues: Nucleotide-binding protein MS1718 (289 aa).

8 to 15 lines the ATP pocket; it reads GRSGAGKS. GTP is bound at residue 56–59; it reads DIRN.

It belongs to the RapZ-like family.

In terms of biological role, displays ATPase and GTPase activities. The polypeptide is Nucleotide-binding protein MS1718 (Mannheimia succiniciproducens (strain KCTC 0769BP / MBEL55E)).